The following is a 120-amino-acid chain: Natriuretic peptide (120 aa).

An N-terminal signal peptide occupies residues 1–25 (MVGLSRLADGGLLLVLALLPLALDG). A propeptide spanning residues 26-70 (KPAPLEKAPMAPARIIPYLRPVGKESRAALDRMVPPEDGDSRRLE) is cleaved from the precursor. An intrachain disulfide couples Cys-81 to Cys-97. A propeptide spanning residues 110–120 (ILPYLRPIRKE) is cleaved from the precursor.

This sequence belongs to the natriuretic peptide family. Expressed by the venom gland.

It is found in the secreted. Functionally, natriuretic peptide that dose-dependently induces the rapid relaxation of rat aortic strips phenylephrine-precontracted. Acts by stimulating cGMP production in a dose-dependent manner (by probably activating NPR1 and/or NPR2). May also show potent hypotensive effects. The protein is Natriuretic peptide of Micrurus altirostris (Uruguayan coral snake).